Here is a 783-residue protein sequence, read N- to C-terminus: Cadherin-5 (783 aa).

The first 25 residues, 1 to 25, serve as a signal peptide directing secretion; sequence MQALVMLLATGATYYLGLLAAAAAA. The propeptide occupies 26 to 45; that stretch reads VNPGRPNTPGSLPAHRRQKR. 5 consecutive Cadherin domains span residues 44–149, 150–256, 257–371, 372–478, and 478–585; these read KRDW…WPVF, THRV…FPIF, TQNR…PPIF, QQPF…APEF, and FAKP…GEFT. The Extracellular portion of the chain corresponds to 46–599; the sequence is DWIWNQMHID…AAAQVGISIQ (554 aa). Glutamate 56 and glutamate 57 together coordinate Ca(2+). N-linked (GlcNAc...) asparagine glycosylation is present at asparagine 59. 7 residues coordinate Ca(2+): aspartate 107, glutamate 109, aspartate 141, valine 142, asparagine 143, aspartate 144, and asparagine 145. Asparagine 155 carries N-linked (GlcNAc...) asparagine glycosylation. Ca(2+)-binding residues include aspartate 175, aspartate 177, histidine 184, and aspartate 229. Residues asparagine 361, asparagine 441, and asparagine 523 are each glycosylated (N-linked (GlcNAc...) asparagine). A helical transmembrane segment spans residues 600-620; it reads ALVAIFLCILTFTVITLLIIL. The segment at 621-660 is required for interaction with PALS1; it reads RRRLRKQARAHGKSVPEIHEQLVTYDEEGGGEMDTTSYDV. The Cytoplasmic segment spans residues 621–783; it reads RRRLRKQARA…GSDPQEELVY (163 aa).

Part of a complex composed of AMOTL2, MAGI1 and CDH5, within the complex AMOTL2 acts as a scaffold protein for the interaction of MAGI1 with CDH5. The complex is required for coupling actin fibers to cell junctions in endothelial cells. Within the complex AMOTL2 (via its N-terminus) interacts with CDH5. Interacts (via cadherin 5 domain) with PTPRB. Interacts with TRPC4. Interacts with KRIT1. Interacts with PARD3. Interacts with RTN4 (isoform B). Interacts with PALS1; the interaction promotes PALS1 localization to cell junctions and is required for CDH5-mediated vascular lumen formation and endothelial cell. Interacts with CTNND1/p120-catenin; the interaction controls CADH5 endocytosis. Phosphorylated on tyrosine residues by KDR/VEGFR-2. Dephosphorylated by PTPRB. Post-translationally, O-glycosylated.

The protein resides in the cell junction. It is found in the adherens junction. The protein localises to the cell membrane. It localises to the cytoplasm. Cadherins are calcium-dependent cell adhesion proteins. They preferentially interact with themselves in a homophilic manner in connecting cells; cadherins may thus contribute to the sorting of heterogeneous cell types. This cadherin may play a important role in endothelial cell biology through control of the cohesion and organization of the intercellular junctions. It associates with alpha-catenin forming a link to the cytoskeleton. Plays a role in coupling actin fibers to cell junctions in endothelial cells, via acting as a cell junctional complex anchor for AMOTL2 and MAGI1. Acts in concert with KRIT1 and PALS1 to establish and maintain correct endothelial cell polarity and vascular lumen. These effects are mediated by recruitment and activation of the Par polarity complex and RAP1B. Required for activation of PRKCZ and for localization of phosphorylated PRKCZ, PARD3, TIAM1 and RAP1B to the cell junction. Associates with CTNND1/p120-catenin to control CADH5 endocytosis. The chain is Cadherin-5 from Bos taurus (Bovine).